A 681-amino-acid chain; its full sequence is Probable L-type lectin-domain containing receptor kinase VII.2 (681 aa).

The signal sequence occupies residues 1–23 (MFSKVSILLFSLASLLLFRSTTG). The segment at 24-260 (IEFIYNSNFT…SHRILSWSFS (237 aa)) is legume-lectin like. Residues 24–290 (IEFIYNSNFT…SGDSVLKSKG (267 aa)) are Extracellular-facing. Residues asparagine 31, asparagine 42, asparagine 56, asparagine 72, asparagine 126, asparagine 202, asparagine 207, asparagine 228, and asparagine 263 are each glycosylated (N-linked (GlcNAc...) asparagine). Residues 291-311 (FIAGVSSGVVLLVSVIGLLCF) traverse the membrane as a helical segment. The Cytoplasmic portion of the chain corresponds to 312–681 (YVVRRRRQRL…QTYDSILHGR (370 aa)). Residues 349-624 (FSDENMIGYG…VVQILEQGRL (276 aa)) enclose the Protein kinase domain. ATP contacts are provided by residues 355 to 363 (IGYGGNSKV) and lysine 376. Aspartate 475 (proton acceptor) is an active-site residue.

In the C-terminal section; belongs to the protein kinase superfamily. Ser/Thr protein kinase family. It in the N-terminal section; belongs to the leguminous lectin family.

It localises to the cell membrane. The catalysed reaction is L-seryl-[protein] + ATP = O-phospho-L-seryl-[protein] + ADP + H(+). It carries out the reaction L-threonyl-[protein] + ATP = O-phospho-L-threonyl-[protein] + ADP + H(+). This is Probable L-type lectin-domain containing receptor kinase VII.2 (LECRK72) from Arabidopsis thaliana (Mouse-ear cress).